Reading from the N-terminus, the 492-residue chain is N-succinylglutamate 5-semialdehyde dehydrogenase (492 aa).

220–225 (GRANTG) is a binding site for NAD(+). Residues Glu-243 and Cys-277 contribute to the active site.

The protein belongs to the aldehyde dehydrogenase family. AstD subfamily.

The enzyme catalyses N-succinyl-L-glutamate 5-semialdehyde + NAD(+) + H2O = N-succinyl-L-glutamate + NADH + 2 H(+). Its pathway is amino-acid degradation; L-arginine degradation via AST pathway; L-glutamate and succinate from L-arginine: step 4/5. In terms of biological role, catalyzes the NAD-dependent reduction of succinylglutamate semialdehyde into succinylglutamate. The chain is N-succinylglutamate 5-semialdehyde dehydrogenase from Shigella boydii serotype 4 (strain Sb227).